The sequence spans 361 residues: ATP-dependent 6-phosphofructokinase 1 (361 aa).

ATP is bound by residues glycine 14, lysine 79–glycine 80, and glycine 116–serine 119. Aspartate 117 serves as a coordination point for Mg(2+). Substrate is bound by residues threonine 140–aspartate 142, arginine 177, methionine 184–arginine 186, glutamate 237, arginine 278, and histidine 284–arginine 287. The active-site Proton acceptor is aspartate 142.

It belongs to the phosphofructokinase type A (PFKA) family. Mixed-substrate PFK group III subfamily. In terms of assembly, homodimer or homotetramer. Requires Mg(2+) as cofactor.

Its subcellular location is the cytoplasm. It catalyses the reaction beta-D-fructose 6-phosphate + ATP = beta-D-fructose 1,6-bisphosphate + ADP + H(+). It functions in the pathway carbohydrate degradation; glycolysis; D-glyceraldehyde 3-phosphate and glycerone phosphate from D-glucose: step 3/4. In terms of biological role, catalyzes the phosphorylation of D-fructose 6-phosphate to fructose 1,6-bisphosphate by ATP, the first committing step of glycolysis. In Synechocystis sp. (strain ATCC 27184 / PCC 6803 / Kazusa), this protein is ATP-dependent 6-phosphofructokinase 1.